The primary structure comprises 121 residues: Large ribosomal subunit protein bL17 (121 aa).

It belongs to the bacterial ribosomal protein bL17 family. Part of the 50S ribosomal subunit. Contacts protein L32.

This is Large ribosomal subunit protein bL17 from Metamycoplasma arthritidis (strain 158L3-1) (Mycoplasma arthritidis).